Reading from the N-terminus, the 234-residue chain is Leucyl/phenylalanyl-tRNA--protein transferase (234 aa).

Belongs to the L/F-transferase family.

It localises to the cytoplasm. It catalyses the reaction N-terminal L-lysyl-[protein] + L-leucyl-tRNA(Leu) = N-terminal L-leucyl-L-lysyl-[protein] + tRNA(Leu) + H(+). It carries out the reaction N-terminal L-arginyl-[protein] + L-leucyl-tRNA(Leu) = N-terminal L-leucyl-L-arginyl-[protein] + tRNA(Leu) + H(+). The catalysed reaction is L-phenylalanyl-tRNA(Phe) + an N-terminal L-alpha-aminoacyl-[protein] = an N-terminal L-phenylalanyl-L-alpha-aminoacyl-[protein] + tRNA(Phe). In terms of biological role, functions in the N-end rule pathway of protein degradation where it conjugates Leu, Phe and, less efficiently, Met from aminoacyl-tRNAs to the N-termini of proteins containing an N-terminal arginine or lysine. In Shigella dysenteriae serotype 1 (strain Sd197), this protein is Leucyl/phenylalanyl-tRNA--protein transferase.